The chain runs to 637 residues: tRNA 5-methylaminomethyl-2-thiouridine biosynthesis bifunctional protein MnmC (637 aa).

Residues 1 to 20 (MSERIEWLEDGTAGGSPYSP) form a disordered region. Residues 1–232 (MSERIEWLED…KRDNLQGEYQ (232 aa)) are tRNA (mnm(5)s(2)U34)-methyltransferase. Positions 255–637 (IGAGLAGSAV…YATRLQPSGS (383 aa)) are FAD-dependent cmnm(5)s(2)U34 oxidoreductase.

In the N-terminal section; belongs to the methyltransferase superfamily. tRNA (mnm(5)s(2)U34)-methyltransferase family. The protein in the C-terminal section; belongs to the DAO family. FAD is required as a cofactor.

The protein localises to the cytoplasm. The enzyme catalyses 5-aminomethyl-2-thiouridine(34) in tRNA + S-adenosyl-L-methionine = 5-methylaminomethyl-2-thiouridine(34) in tRNA + S-adenosyl-L-homocysteine + H(+). In terms of biological role, catalyzes the last two steps in the biosynthesis of 5-methylaminomethyl-2-thiouridine (mnm(5)s(2)U) at the wobble position (U34) in tRNA. Catalyzes the FAD-dependent demodification of cmnm(5)s(2)U34 to nm(5)s(2)U34, followed by the transfer of a methyl group from S-adenosyl-L-methionine to nm(5)s(2)U34, to form mnm(5)s(2)U34. In Polaromonas naphthalenivorans (strain CJ2), this protein is tRNA 5-methylaminomethyl-2-thiouridine biosynthesis bifunctional protein MnmC.